Consider the following 458-residue polypeptide: tRNA modification GTPase MnmE (458 aa).

(6S)-5-formyl-5,6,7,8-tetrahydrofolate-binding residues include Arg22, Glu84, and Arg123. The 160-residue stretch at 220–379 (GIATAIIGRP…LETAIADLFF (160 aa)) folds into the TrmE-type G domain. Asn230 is a K(+) binding site. Residues 230-235 (NVGKSS), 249-255 (TDIAGTT), and 274-277 (DTAG) each bind GTP. Ser234 contacts Mg(2+). 3 residues coordinate K(+): Thr249, Ile251, and Thr254. Thr255 serves as a coordination point for Mg(2+). Lys458 serves as a coordination point for (6S)-5-formyl-5,6,7,8-tetrahydrofolate.

It belongs to the TRAFAC class TrmE-Era-EngA-EngB-Septin-like GTPase superfamily. TrmE GTPase family. In terms of assembly, homodimer. Heterotetramer of two MnmE and two MnmG subunits. K(+) serves as cofactor.

It localises to the cytoplasm. In terms of biological role, exhibits a very high intrinsic GTPase hydrolysis rate. Involved in the addition of a carboxymethylaminomethyl (cmnm) group at the wobble position (U34) of certain tRNAs, forming tRNA-cmnm(5)s(2)U34. This is tRNA modification GTPase MnmE from Bacillus cereus (strain ATCC 10987 / NRS 248).